The following is a 514-amino-acid chain: ATP synthase subunit alpha (514 aa).

Residue 170-177 (GDRQTGKT) coordinates ATP.

This sequence belongs to the ATPase alpha/beta chains family. As to quaternary structure, F-type ATPases have 2 components, CF(1) - the catalytic core - and CF(0) - the membrane proton channel. CF(1) has five subunits: alpha(3), beta(3), gamma(1), delta(1), epsilon(1). CF(0) has three main subunits: a(1), b(2) and c(9-12). The alpha and beta chains form an alternating ring which encloses part of the gamma chain. CF(1) is attached to CF(0) by a central stalk formed by the gamma and epsilon chains, while a peripheral stalk is formed by the delta and b chains.

The protein localises to the cell inner membrane. The catalysed reaction is ATP + H2O + 4 H(+)(in) = ADP + phosphate + 5 H(+)(out). Produces ATP from ADP in the presence of a proton gradient across the membrane. The alpha chain is a regulatory subunit. This chain is ATP synthase subunit alpha, found in Acinetobacter baumannii (strain AB307-0294).